The sequence spans 129 residues: Small ribosomal subunit protein uS11 (129 aa).

It belongs to the universal ribosomal protein uS11 family. As to quaternary structure, part of the 30S ribosomal subunit. Interacts with proteins S7 and S18. Binds to IF-3.

Located on the platform of the 30S subunit, it bridges several disparate RNA helices of the 16S rRNA. Forms part of the Shine-Dalgarno cleft in the 70S ribosome. The polypeptide is Small ribosomal subunit protein uS11 (Methylocella silvestris (strain DSM 15510 / CIP 108128 / LMG 27833 / NCIMB 13906 / BL2)).